The sequence spans 372 residues: tRNA-specific 2-thiouridylase MnmA (372 aa).

ATP contacts are provided by residues 11–18 (GMSGGVDS) and M37. The interval 97-99 (NPD) is interaction with target base in tRNA. The active-site Nucleophile is the C102. A disulfide bridge links C102 with C199. Residue G126 participates in ATP binding. The interaction with tRNA stretch occupies residues 149-151 (KDQ). C199 acts as the Cysteine persulfide intermediate in catalysis. Residues 309 to 310 (RY) are interaction with tRNA.

This sequence belongs to the MnmA/TRMU family.

It localises to the cytoplasm. The catalysed reaction is S-sulfanyl-L-cysteinyl-[protein] + uridine(34) in tRNA + AH2 + ATP = 2-thiouridine(34) in tRNA + L-cysteinyl-[protein] + A + AMP + diphosphate + H(+). Functionally, catalyzes the 2-thiolation of uridine at the wobble position (U34) of tRNA, leading to the formation of s(2)U34. The protein is tRNA-specific 2-thiouridylase MnmA of Staphylococcus aureus (strain bovine RF122 / ET3-1).